The primary structure comprises 346 residues: Elongation factor Ts (346 aa).

The tract at residues 80 to 83 is involved in Mg(2+) ion dislocation from EF-Tu; it reads TDFV.

The protein belongs to the EF-Ts family.

The protein resides in the cytoplasm. Associates with the EF-Tu.GDP complex and induces the exchange of GDP to GTP. It remains bound to the aminoacyl-tRNA.EF-Tu.GTP complex up to the GTP hydrolysis stage on the ribosome. This is Elongation factor Ts from Streptococcus suis (strain 98HAH33).